The primary structure comprises 258 residues: Triosephosphate isomerase (258 aa).

9 to 11 (NWK) serves as a coordination point for substrate. Catalysis depends on histidine 95, which acts as the Electrophile. Glutamate 167 serves as the catalytic Proton acceptor. Substrate-binding residues include glycine 173 and serine 212.

The protein belongs to the triosephosphate isomerase family. In terms of assembly, homodimer.

Its subcellular location is the cytoplasm. The catalysed reaction is D-glyceraldehyde 3-phosphate = dihydroxyacetone phosphate. The protein operates within carbohydrate biosynthesis; gluconeogenesis. It participates in carbohydrate degradation; glycolysis; D-glyceraldehyde 3-phosphate from glycerone phosphate: step 1/1. Involved in the gluconeogenesis. Catalyzes stereospecifically the conversion of dihydroxyacetone phosphate (DHAP) to D-glyceraldehyde-3-phosphate (G3P). This chain is Triosephosphate isomerase, found in Blochmanniella pennsylvanica (strain BPEN).